Reading from the N-terminus, the 352-residue chain is Blue-sensitive opsin (352 aa).

Residues Met-1 to Ile-42 are Extracellular-facing. Asn-23 is a glycosylation site (N-linked (GlcNAc...) asparagine). The helical transmembrane segment at Phe-43–Cys-67 threads the bilayer. At Thr-68–Asn-79 the chain is on the cytoplasmic side. A helical transmembrane segment spans residues Tyr-80–Ala-105. Topologically, residues Phe-106–Glu-119 are extracellular. Cys-116 and Cys-193 form a disulfide bridge. The chain crosses the membrane as a helical span at residues Gly-120 to Phe-139. Residues Glu-140–His-158 lie on the Cytoplasmic side of the membrane. A helical transmembrane segment spans residues Ala-159–Ser-182. Topologically, residues Arg-183–Ser-208 are extracellular. An N-linked (GlcNAc...) asparagine glycan is attached at Asn-206. Residues Phe-209–Leu-236 form a helical membrane-spanning segment. Residues Lys-237–Arg-258 lie on the Cytoplasmic side of the membrane. Residues Met-259–Ile-282 form a helical membrane-spanning segment. The Extracellular portion of the chain corresponds to Asn-283–Asp-290. Residues Leu-291–Leu-315 traverse the membrane as a helical segment. Residue Lys-302 is modified to N6-(retinylidene)lysine. Residues Asn-316 to Ser-352 lie on the Cytoplasmic side of the membrane. The interval Asp-332–Ser-352 is disordered.

Belongs to the G-protein coupled receptor 1 family. Opsin subfamily. In terms of processing, phosphorylated on some or all of the serine and threonine residues present in the C-terminal region. The color pigments are found in the cone photoreceptor cells.

It localises to the membrane. Visual pigments are the light-absorbing molecules that mediate vision. They consist of an apoprotein, opsin, covalently linked to cis-retinal. This is Blue-sensitive opsin from Oryzias latipes (Japanese rice fish).